The primary structure comprises 335 residues: Ribosomal RNA large subunit methyltransferase F (335 aa).

The protein belongs to the methyltransferase superfamily. METTL16/RlmF family.

Its subcellular location is the cytoplasm. It carries out the reaction adenosine(1618) in 23S rRNA + S-adenosyl-L-methionine = N(6)-methyladenosine(1618) in 23S rRNA + S-adenosyl-L-homocysteine + H(+). In terms of biological role, specifically methylates the adenine in position 1618 of 23S rRNA. The chain is Ribosomal RNA large subunit methyltransferase F from Yersinia enterocolitica serotype O:8 / biotype 1B (strain NCTC 13174 / 8081).